Consider the following 355-residue polypeptide: Glucokinase (355 aa).

ATP is bound at residue G11–T16.

Belongs to the bacterial glucokinase family.

It localises to the cytoplasm. The catalysed reaction is D-glucose + ATP = D-glucose 6-phosphate + ADP + H(+). This chain is Glucokinase, found in Synechocystis sp. (strain ATCC 27184 / PCC 6803 / Kazusa).